The following is a 159-amino-acid chain: Transcriptional repressor NrdR (159 aa).

Residues 3-34 (CPFCRHDDTQVVDSRVSEDGAAIRRRRRCSAC) fold into a zinc finger. In terms of domain architecture, ATP-cone spans 49–139 (PAVVKKDGSR…VYRRFEDVSE (91 aa)).

Belongs to the NrdR family. It depends on Zn(2+) as a cofactor.

In terms of biological role, negatively regulates transcription of bacterial ribonucleotide reductase nrd genes and operons by binding to NrdR-boxes. The polypeptide is Transcriptional repressor NrdR (Burkholderia cenocepacia (strain HI2424)).